The primary structure comprises 242 residues: Uridylate kinase (242 aa).

ATP is bound at residue 16–19 (KVSG). Gly-58 is a UMP binding site. Residues Gly-59 and Arg-63 each contribute to the ATP site. UMP contacts are provided by residues Asp-78 and 139 to 146 (TGNPFCTT). Residues Thr-166, Gln-167, Tyr-172, and Asp-175 each contribute to the ATP site.

Belongs to the UMP kinase family. As to quaternary structure, homohexamer.

Its subcellular location is the cytoplasm. It carries out the reaction UMP + ATP = UDP + ADP. It functions in the pathway pyrimidine metabolism; CTP biosynthesis via de novo pathway; UDP from UMP (UMPK route): step 1/1. Its activity is regulated as follows. Inhibited by UTP. Its function is as follows. Catalyzes the reversible phosphorylation of UMP to UDP. This Rickettsia prowazekii (strain Madrid E) protein is Uridylate kinase.